The primary structure comprises 87 residues: UPF0367 protein SynRCC307_0258 (87 aa).

It belongs to the UPF0367 family.

The protein is UPF0367 protein SynRCC307_0258 of Synechococcus sp. (strain RCC307).